We begin with the raw amino-acid sequence, 115 residues long: Holo-[acyl-carrier-protein] synthase (115 aa).

D6 and E51 together coordinate Mg(2+).

The protein belongs to the P-Pant transferase superfamily. AcpS family. It depends on Mg(2+) as a cofactor.

It is found in the cytoplasm. The catalysed reaction is apo-[ACP] + CoA = holo-[ACP] + adenosine 3',5'-bisphosphate + H(+). Functionally, transfers the 4'-phosphopantetheine moiety from coenzyme A to a Ser of acyl-carrier-protein. The protein is Holo-[acyl-carrier-protein] synthase of Campylobacter jejuni subsp. doylei (strain ATCC BAA-1458 / RM4099 / 269.97).